The following is a 376-amino-acid chain: Phytanoyl-CoA hydroxylase interacting protein-like (376 aa).

Phosphoserine is present on residues Ser-12 and Ser-15. Residue Asn-23 is glycosylated (N-linked (GlcNAc...) asparagine). The residue at position 25 (Ser-25) is a Phosphoserine. Asn-37 is a glycosylation site (N-linked (GlcNAc...) asparagine). The 110-residue stretch at 52–161 folds into the Fibronectin type-III domain; it reads VPRNIKISNI…EIIEFCTADY (110 aa).

It belongs to the PHYHIP family.

In terms of biological role, may play a role in the development of the central system. In Bos taurus (Bovine), this protein is Phytanoyl-CoA hydroxylase interacting protein-like (PHYHIPL).